The primary structure comprises 233 residues: Histone H1-I (233 aa).

Disordered regions lie at residues 1–55 and 115–233; these read MSDS…HPPV and TGAS…KKSK. Residues 17–29 show a composition bias toward low complexity; that stretch reads KAASPAKSPAKSP. Positions 51–125 constitute an H15 domain; sequence THPPVSEMVV…GASGSFKMPP (75 aa). 2 stretches are compositionally biased toward basic and acidic residues: residues 128–137 and 146–155; these read KKVDRPESAP and TRVERKEKKV. Basic residues-rich tracts occupy residues 172 to 213 and 223 to 233; these read AAKK…KPTP and AAARKPAKKSK.

This sequence belongs to the histone H1/H5 family.

The protein localises to the nucleus. It is found in the chromosome. Functionally, histones H1 are necessary for the condensation of nucleosome chains into higher-order structures. This chain is Histone H1-I, found in Glyptotendipes barbipes (Midge).